Here is a 389-residue protein sequence, read N- to C-terminus: Na(+)/H(+) antiporter NhaA (389 aa).

11 helical membrane passes run 17-37 (ILLLVAVALAMLMANSPLAGL), 59-79 (LLLWINDGLMALFFLLIGLEV), 95-115 (SLPTFAAIGGMLVPAGIYLLF), 124-144 (AGWAIPAATDIAFALGIMALL), 154-174 (VFLLALAIIDDLGVIVIIALF), 177-197 (TDLSTISLIIASIAIVGLVAL), 213-233 (LVLWVAVLKSGVHATLAGVII), 261-281 (FLILPVFAFANAGVALGNMSL), 287-307 (PVPVGIALGLMLGKPIGVMLF), 328-348 (IAPVAAMCGIGFTMSMFIASL), and 363-383 (LGTLIGSIIAALIGYFWLSKV).

Belongs to the NhaA Na(+)/H(+) (TC 2.A.33) antiporter family.

The protein localises to the cell inner membrane. It carries out the reaction Na(+)(in) + 2 H(+)(out) = Na(+)(out) + 2 H(+)(in). In terms of biological role, na(+)/H(+) antiporter that extrudes sodium in exchange for external protons. The polypeptide is Na(+)/H(+) antiporter NhaA (Shewanella sp. (strain MR-7)).